The sequence spans 302 residues: Calpain-1 catalytic subunit (302 aa).

The segment at 1-114 is domain III; it reads RESGCSFVLA…KRAGTQELDD (114 aa). Residues 115–130 are linker; the sequence is QIQANLPDEQVLSAEE. The segment at 131–301 is domain IV; the sequence is IDENFKALFR…LFKWLQLTMF (171 aa). 3 EF-hand domains span residues 173-206, 203-238, and 268-302; these read FSME…NRIR, NRIR…AGFK, and VRLE…TMFA. Aspartate 186, aspartate 188, asparagine 190, lysine 192, glutamate 197, aspartate 216, aspartate 218, serine 220, serine 222, and glutamate 227 together coordinate Ca(2+).

This sequence belongs to the peptidase C2 family. In terms of assembly, forms a heterodimer with a small (regulatory) subunit CAPNS1. The cofactor is Ca(2+). In terms of processing, the N-terminus is blocked. Post-translationally, undergoes calcium-induced successive autoproteolytic cleavages that generate a membrane-bound 78 kDa active form and an intracellular 75 kDa active form. Calpastatin reduces with high efficiency the transition from 78 kDa to 75 kDa calpain forms. In terms of tissue distribution, ubiquitous.

Its subcellular location is the cytoplasm. It is found in the cell membrane. The enzyme catalyses Broad endopeptidase specificity.. Its activity is regulated as follows. Activated by micromolar concentrations of calcium and inhibited by calpastatin. Functionally, calcium-regulated non-lysosomal thiol-protease which catalyzes limited proteolysis of substrates involved in cytoskeletal remodeling and signal transduction. Proteolytically cleaves CTBP1. Cleaves and activates caspase-7 (CASP7). In Oryctolagus cuniculus (Rabbit), this protein is Calpain-1 catalytic subunit.